Reading from the N-terminus, the 858-residue chain is DNA mismatch repair protein MutS (858 aa).

ATP is bound at residue 602–609 (GPNMSGKS).

It belongs to the DNA mismatch repair MutS family.

Its function is as follows. This protein is involved in the repair of mismatches in DNA. It is possible that it carries out the mismatch recognition step. This protein has a weak ATPase activity. Overexpression of mutSL partially suppresses the high spontaneous mutation frequency of a ytkD/mutM/mutY triple disruption which lacks the system required to prevent damage by oxidized guanine (8-oxo-dGTP). This suggests that MutSL also functions to repair mismatches due to oxidative stress in both growing and stationary phase cells. This is DNA mismatch repair protein MutS from Bacillus subtilis (strain 168).